The chain runs to 320 residues: Aspartate carbamoyltransferase catalytic subunit (320 aa).

Positions 58 and 59 each coordinate carbamoyl phosphate. L-aspartate is bound at residue K86. Positions 108, 136, and 139 each coordinate carbamoyl phosphate. The L-aspartate site is built by R169 and R223. Carbamoyl phosphate contacts are provided by G264 and P265.

It belongs to the aspartate/ornithine carbamoyltransferase superfamily. ATCase family. Heterododecamer (2C3:3R2) of six catalytic PyrB chains organized as two trimers (C3), and six regulatory PyrI chains organized as three dimers (R2).

The enzyme catalyses carbamoyl phosphate + L-aspartate = N-carbamoyl-L-aspartate + phosphate + H(+). The protein operates within pyrimidine metabolism; UMP biosynthesis via de novo pathway; (S)-dihydroorotate from bicarbonate: step 2/3. Catalyzes the condensation of carbamoyl phosphate and aspartate to form carbamoyl aspartate and inorganic phosphate, the committed step in the de novo pyrimidine nucleotide biosynthesis pathway. This chain is Aspartate carbamoyltransferase catalytic subunit, found in Cereibacter sphaeroides (strain ATCC 17029 / ATH 2.4.9) (Rhodobacter sphaeroides).